Reading from the N-terminus, the 506-residue chain is Maturase K (506 aa).

The protein belongs to the intron maturase 2 family. MatK subfamily.

It is found in the plastid. The protein resides in the chloroplast. Functionally, usually encoded in the trnK tRNA gene intron. Probably assists in splicing its own and other chloroplast group II introns. This Lathyrus aphaca (Yellow vetchling) protein is Maturase K.